The primary structure comprises 99 residues: uncharacterized protein (99 aa).

The first 17 residues, 1-17 (MMMNAFFPAMALIVLVG), serve as a signal peptide directing secretion. Cys18 carries the N-palmitoyl cysteine lipid modification. Cys18 carries S-diacylglycerol cysteine lipidation.

The protein resides in the cell membrane. This is an uncharacterized protein from Escherichia coli O6:H1 (strain CFT073 / ATCC 700928 / UPEC).